The sequence spans 254 residues: Adenosylcobinamide-GDP ribazoletransferase (254 aa).

6 consecutive transmembrane segments (helical) span residues 28 to 48 (FRQT…IVAL), 62 to 81 (IGVY…IDGI), 109 to 129 (VGVG…LGVL), 138 to 158 (VTFI…ALLV), 179 to 199 (LSLF…PYLG), and 200 to 220 (ASPT…IKQW).

Belongs to the CobS family. Requires Mg(2+) as cofactor.

It localises to the cell membrane. It carries out the reaction alpha-ribazole + adenosylcob(III)inamide-GDP = adenosylcob(III)alamin + GMP + H(+). It catalyses the reaction alpha-ribazole 5'-phosphate + adenosylcob(III)inamide-GDP = adenosylcob(III)alamin 5'-phosphate + GMP + H(+). The protein operates within cofactor biosynthesis; adenosylcobalamin biosynthesis; adenosylcobalamin from cob(II)yrinate a,c-diamide: step 7/7. Functionally, joins adenosylcobinamide-GDP and alpha-ribazole to generate adenosylcobalamin (Ado-cobalamin). Also synthesizes adenosylcobalamin 5'-phosphate from adenosylcobinamide-GDP and alpha-ribazole 5'-phosphate. The protein is Adenosylcobinamide-GDP ribazoletransferase of Haloquadratum walsbyi (strain DSM 16790 / HBSQ001).